The following is a 234-amino-acid chain: MSILNDFSHLSSEGPKLTARQQQILELIQSAITRTGAPPTRAEIANELGFKSANAAEEHLQALARKGVIELVSGTSRGIRLRSDTLRSIHESRVKQFSLPLQSLAQLALPLVGRVAAGSPILAQEHIEQTYYFESSLFQRQPDYLLKVRGMSMRDAGIIDGDLLAVKQAKEARNGQIVVARIGDEVTVKRFRRTKHLIELLPENPDFKTIVVEPGEPFELEGLAVGLIRNTMLI.

The H-T-H motif DNA-binding region spans 41–61 (RAEIANELGFKSANAAEEHLQ). Residues serine 152 and lysine 189 each act as for autocatalytic cleavage activity in the active site.

It belongs to the peptidase S24 family. In terms of assembly, homodimer.

It carries out the reaction Hydrolysis of Ala-|-Gly bond in repressor LexA.. In terms of biological role, represses a number of genes involved in the response to DNA damage (SOS response), including recA and lexA. In the presence of single-stranded DNA, RecA interacts with LexA causing an autocatalytic cleavage which disrupts the DNA-binding part of LexA, leading to derepression of the SOS regulon and eventually DNA repair. The polypeptide is LexA repressor (Polaromonas sp. (strain JS666 / ATCC BAA-500)).